A 786-amino-acid chain; its full sequence is Cas scaffolding protein family member 4 (786 aa).

The 63-residue stretch at 11 to 73 (PKALLARALY…PANRLQILTE (63 aa)) folds into the SH3 domain. Phosphoserine occurs at positions 200 and 249. Positions 262–295 (SFAEESRPHALPSSSSTFYNPPSGRSRSLTPQLN) are disordered. Over residues 273–295 (PSSSSTFYNPPSGRSRSLTPQLN) the composition is skewed to polar residues. Ser305 is modified (phosphoserine). Disordered regions lie at residues 361-429 (QAGK…SEES) and 612-670 (IQPP…ERKP). Residues 364–373 (KELEKAKEVS) are compositionally biased toward basic and acidic residues. Residues 374 to 391 (ENSAGHNSSWFSRRTTSP) show a composition bias toward polar residues. Residues Ser376 and Ser390 each carry the phosphoserine modification. The span at 399–427 (SGSSSDSRASIVSSCSTTSTDDSSSSSSE) shows a compositional bias: low complexity. Basic and acidic residues predominate over residues 630-642 (KQREDEHSSELLK).

It belongs to the CAS family. Interacts (via SH3 domain) with PTK2/FAK1 (via C-terminus). Phosphorylated on tyrosines by SRC. In terms of tissue distribution, expressed abundantly in lung and spleen. Also highly expressed in ovarian and leukemia cell lines.

The protein localises to the cytoplasm. The protein resides in the cytoskeleton. It localises to the cell junction. Its subcellular location is the focal adhesion. In terms of biological role, docking protein that plays a role in tyrosine kinase-based signaling related to cell adhesion and cell spreading. Regulates PTK2/FAK1 activity, focal adhesion integrity, and cell spreading. The protein is Cas scaffolding protein family member 4 (CASS4) of Homo sapiens (Human).